Here is a 230-residue protein sequence, read N- to C-terminus: Uracil-DNA glycosylase (230 aa).

Aspartate 70 serves as the catalytic Proton acceptor.

Belongs to the uracil-DNA glycosylase (UDG) superfamily. UNG family.

Its subcellular location is the cytoplasm. The enzyme catalyses Hydrolyzes single-stranded DNA or mismatched double-stranded DNA and polynucleotides, releasing free uracil.. Its function is as follows. Excises uracil residues from the DNA which can arise as a result of misincorporation of dUMP residues by DNA polymerase or due to deamination of cytosine. The protein is Uracil-DNA glycosylase of Pseudomonas putida (strain GB-1).